Here is a 289-residue protein sequence, read N- to C-terminus: MTPVEFLASNPLAFVLCALVLGLLVGSFLNVVIHRLPIMMQRDWQSQAREFLELPAEPAGAAFNLFLPHSRCPHCDHQIRAWENIPLISWLALRGKCSACKASISKRYPLVELACGLLSGYVAWHFGFSWQAGAMLLLTWGLLAMSMIDVDHQLLPDSLVLPLLWLGLIINSFGLFASLEDALWGAVVGYLALWSVYWLFKLVTGKEGMGYGDFKLLAMLGAWGGWQVLPLTILLSSVVGAVLGTVMLRMQKAESGTPIPFGPYLAIAGWVALLWGDQITASYLQFARL.

A helical membrane pass occupies residues 13–33 (AFVLCALVLGLLVGSFLNVVI). Zn(2+) is bound by residues C72, C75, C97, and C100. Transmembrane regions (helical) follow at residues 128–148 (FSWQ…MSMI), 159–179 (LVLP…FASL), 183–203 (LWGA…FKLV), 228–248 (VLPL…TVML), and 256–276 (GTPI…LLWG).

This sequence belongs to the peptidase A24 family. It depends on Zn(2+) as a cofactor.

Its subcellular location is the cell inner membrane. The enzyme catalyses Typically cleaves a -Gly-|-Phe- bond to release an N-terminal, basic peptide of 5-8 residues from type IV prepilin, and then N-methylates the new N-terminal amino group, the methyl donor being S-adenosyl-L-methionine.. Functionally, plays an essential role in type IV pili and type II pseudopili formation by proteolytically removing the leader sequence from substrate proteins and subsequently monomethylating the alpha-amino group of the newly exposed N-terminal phenylalanine. The polypeptide is Prepilin leader peptidase/N-methyltransferase (pilD) (Stutzerimonas stutzeri (Pseudomonas stutzeri)).